A 339-amino-acid chain; its full sequence is Large ribosomal subunit protein uL10 (339 aa).

Positions 300 to 339 (AAAQATPSVEEREEEEKPEEEEEEEEKEEEAIEGLGALFG) are disordered. The segment covering 310 to 331 (EREEEEKPEEEEEEEEKEEEAI) has biased composition (acidic residues).

It belongs to the universal ribosomal protein uL10 family. Part of the 50S ribosomal subunit. Forms part of the ribosomal stalk which helps the ribosome interact with GTP-bound translation factors. Forms a heptameric L10(L12)2(L12)2(L12)2 complex, where L10 forms an elongated spine to which the L12 dimers bind in a sequential fashion.

In terms of biological role, forms part of the ribosomal stalk, playing a central role in the interaction of the ribosome with GTP-bound translation factors. This is Large ribosomal subunit protein uL10 from Archaeoglobus fulgidus (strain ATCC 49558 / DSM 4304 / JCM 9628 / NBRC 100126 / VC-16).